Reading from the N-terminus, the 603-residue chain is Grainyhead-like protein 3 homolog (603 aa).

A transcription activation region spans residues 30–95 (EAWKTYLENP…QGKKFYHSMD (66 aa)). The region spanning 226–461 (GLKSDFEYTL…DLETQPVLFI (236 aa)) is the Grh/CP2 DB domain.

The protein belongs to the grh/CP2 family. Grainyhead subfamily. Homodimer, also forms heterodimers with GRHL1 and GRHL2. Interacts with LMO4.

It is found in the nucleus. Transcription factor playing important roles in primary neurulation and in the differentiation of stratified epithelia of both ectodermal and endodermal origin. Binds directly to the consensus DNA sequence 5'-AACCGGTT-3' acting as an activator and repressor on distinct target genes. Essential for epidermal differentiation and barrier formation at the end of embryogenesis with TGM3 as critical direct target. Exhibits functional redundancy with GRHL2 in epidermal morphogenetic events such as eyelid fusion and epidermal wound repair. Despite being dispensable during normal epidermal homeostasis in the adulthood, is again required for barrier repair after immune-mediated epidermal damage, regulates distinct gene batteries in embryonic epidermal differentiation and adult epidermal barrier reformation after injury. Plays unique and cooperative roles with GRHL2 in establishing distinct zones of primary neurulation. Essential for spinal closure, functions cooperatively with GRHL2 in closure 2 (forebrain/midbrain boundary) and posterior neuropore closure. Also required for proper development of the oral periderm. No genetic interaction with GRHL1, no functional cooperativity due to diverse target gene selectivity. The chain is Grainyhead-like protein 3 homolog from Mus musculus (Mouse).